The primary structure comprises 406 residues: tRNA-specific 2-thiouridylase MnmA (406 aa).

Residues 6 to 13 (AMSGGVDS) and Leu-32 each bind ATP. Cys-101 acts as the Nucleophile in catalysis. A disulfide bond links Cys-101 and Cys-193. Gly-125 is a binding site for ATP. The interval 143–145 (KDQ) is interaction with tRNA. The active-site Cysteine persulfide intermediate is the Cys-193. The segment at 378–406 (GAPIEEQPAPGTVGAVDADAIEQGEDAQR) is disordered. The segment covering 396–406 (DAIEQGEDAQR) has biased composition (acidic residues).

Belongs to the MnmA/TRMU family.

It localises to the cytoplasm. The catalysed reaction is S-sulfanyl-L-cysteinyl-[protein] + uridine(34) in tRNA + AH2 + ATP = 2-thiouridine(34) in tRNA + L-cysteinyl-[protein] + A + AMP + diphosphate + H(+). In terms of biological role, catalyzes the 2-thiolation of uridine at the wobble position (U34) of tRNA, leading to the formation of s(2)U34. The polypeptide is tRNA-specific 2-thiouridylase MnmA (Corynebacterium urealyticum (strain ATCC 43042 / DSM 7109)).